A 314-amino-acid polypeptide reads, in one-letter code: Oxaloacetate tautomerase FAHD2A, mitochondrial (314 aa).

Residues 1 to 84 (MLVSGRRRLL…ATLSVARRAL (84 aa)) constitute a mitochondrion transit peptide. Mg(2+) is bound by residues Glu159, Glu161, and Asp190.

This sequence belongs to the FAH family. Requires Mg(2+) as cofactor. Mn(2+) is required as a cofactor.

The protein resides in the mitochondrion. It catalyses the reaction oxaloacetate = enol-oxaloacetate. In terms of biological role, tautomerase that converts enol-oxaloacetate, a strong inhibitor of succinate dehydrogenase, to the physiological keto form of oxaloacetate. It is thereby required to maximize aerobic respiration efficiency by preventing succinate dehydrogenase inhibition. The polypeptide is Oxaloacetate tautomerase FAHD2A, mitochondrial (Homo sapiens (Human)).